A 932-amino-acid polypeptide reads, in one-letter code: Myelin gene regulatory factor-like A (932 aa).

Composition is skewed to low complexity over residues M1–Q19 and Q33–Q48. Disordered stretches follow at residues M1 to G63, V152 to S256, T269 to P328, V540 to M568, T582 to L601, T613 to N660, and N680 to N726. A compositionally biased stretch (polar residues) spans P49–G59. Positions L127–S154 form a coiled coil. Low complexity-rich tracts occupy residues V152–T249 and P277–P294. A DNA-binding region (NDT80) is located at residues P286–L546. Residues E311–P328 are compositionally biased toward polar residues. Composition is skewed to low complexity over residues N615–N660 and N680–N721. The Peptidase S74 domain maps to S767–L877. Residues T863–T895 are a coiled coil. Residues T895–P915 traverse the membrane as a helical segment.

It is found in the membrane. Its function is as follows. Transcription factor which acts as a key regulator of pstA (prestalk-A) cells differentiation. Essential for ecmA-specific gene expression. The protein is Myelin gene regulatory factor-like A (mrfA) of Dictyostelium discoideum (Social amoeba).